The primary structure comprises 79 residues: Small ribosomal subunit protein bS18c (79 aa).

The protein belongs to the bacterial ribosomal protein bS18 family. As to quaternary structure, part of the 30S ribosomal subunit.

Its subcellular location is the plastid. It is found in the chloroplast. The chain is Small ribosomal subunit protein bS18c from Chaetosphaeridium globosum (Charophycean green alga).